We begin with the raw amino-acid sequence, 255 residues long: Pimeloyl-[acyl-carrier protein] methyl ester esterase (255 aa).

The region spanning 16 to 242 is the AB hydrolase-1 domain; the sequence is LVLLHGWGMN…SSHAPFITEP (227 aa). Residues tryptophan 22, 82–83, and 143–147 each bind substrate; these read SL and FMALQ. Serine 82 functions as the Nucleophile in the catalytic mechanism. Catalysis depends on residues aspartate 207 and histidine 235. Histidine 235 lines the substrate pocket.

This sequence belongs to the AB hydrolase superfamily. Carboxylesterase BioH family. As to quaternary structure, monomer.

The protein localises to the cytoplasm. It catalyses the reaction 6-carboxyhexanoyl-[ACP] methyl ester + H2O = 6-carboxyhexanoyl-[ACP] + methanol + H(+). The protein operates within cofactor biosynthesis; biotin biosynthesis. Its function is as follows. The physiological role of BioH is to remove the methyl group introduced by BioC when the pimeloyl moiety is complete. It allows to synthesize pimeloyl-ACP via the fatty acid synthetic pathway through the hydrolysis of the ester bonds of pimeloyl-ACP esters. In Vibrio vulnificus (strain YJ016), this protein is Pimeloyl-[acyl-carrier protein] methyl ester esterase.